The following is a 136-amino-acid chain: ATP synthase epsilon chain (136 aa).

It belongs to the ATPase epsilon chain family. As to quaternary structure, F-type ATPases have 2 components, CF(1) - the catalytic core - and CF(0) - the membrane proton channel. CF(1) has five subunits: alpha(3), beta(3), gamma(1), delta(1), epsilon(1). CF(0) has three main subunits: a, b and c.

The protein localises to the cell inner membrane. Its function is as follows. Produces ATP from ADP in the presence of a proton gradient across the membrane. The chain is ATP synthase epsilon chain from Hydrogenobaculum sp. (strain Y04AAS1).